The sequence spans 249 residues: Adapter protein MecA (249 aa).

The protein belongs to the MecA family. In terms of assembly, homodimer.

Its function is as follows. Enables the recognition and targeting of unfolded and aggregated proteins to the ClpC protease or to other proteins involved in proteolysis. The protein is Adapter protein MecA of Streptococcus thermophilus (strain CNRZ 1066).